The sequence spans 359 residues: NADH-quinone oxidoreductase subunit H (359 aa).

Helical transmembrane passes span 16–36, 94–114, 129–149, 167–187, 208–228, 261–281, 296–316, and 331–351; these read IWPATVWPVLWALIKIVCVLL, GLFVLGPIMTIMPALAAWAVI, LLFLMAITSMEVYGVIIAGWA, VSYEIAMGFCLVVVLMVSASL, FLSWNWLPLLPIFVVYFISGL, FFLAEYANMWLVAILAVILFL, IPGWIWLGAKTFVVVTMFLWV, and LGWKIFIPVTLVWLVVVGAWM.

This sequence belongs to the complex I subunit 1 family. In terms of assembly, NDH-1 is composed of 14 different subunits. Subunits NuoA, H, J, K, L, M, N constitute the membrane sector of the complex.

The protein resides in the cell inner membrane. The catalysed reaction is a quinone + NADH + 5 H(+)(in) = a quinol + NAD(+) + 4 H(+)(out). Functionally, NDH-1 shuttles electrons from NADH, via FMN and iron-sulfur (Fe-S) centers, to quinones in the respiratory chain. The immediate electron acceptor for the enzyme in this species is believed to be ubiquinone. Couples the redox reaction to proton translocation (for every two electrons transferred, four hydrogen ions are translocated across the cytoplasmic membrane), and thus conserves the redox energy in a proton gradient. This subunit may bind ubiquinone. This is NADH-quinone oxidoreductase subunit H from Polaromonas sp. (strain JS666 / ATCC BAA-500).